We begin with the raw amino-acid sequence, 1342 residues long: DNA-directed RNA polymerase subunit beta (1342 aa).

Residues lysine 1022 and lysine 1200 each carry the N6-acetyllysine modification.

The protein belongs to the RNA polymerase beta chain family. In terms of assembly, the RNAP catalytic core consists of 2 alpha, 1 beta, 1 beta' and 1 omega subunit. When a sigma factor is associated with the core the holoenzyme is formed, which can initiate transcription.

The enzyme catalyses RNA(n) + a ribonucleoside 5'-triphosphate = RNA(n+1) + diphosphate. Its function is as follows. DNA-dependent RNA polymerase catalyzes the transcription of DNA into RNA using the four ribonucleoside triphosphates as substrates. This is DNA-directed RNA polymerase subunit beta from Escherichia coli O139:H28 (strain E24377A / ETEC).